Reading from the N-terminus, the 734-residue chain is Photosystem I P700 chlorophyll a apoprotein A2 (734 aa).

8 helical membrane-spanning segments follow: residues 46–69, 135–158, 175–199, 273–291, 330–353, 369–395, 417–439, and 517–535; these read IFASHFGQLAIIFLWTSGNLFHVA, LYTGALFLLFLSAISLIAGWLHLQ, LNHHLSGLFGVSSLAWTGHLVHVAI, IAHHHLAIAFIFLVAGHMY, LHFQLGLALASLGVITSLVAQHMY, AALYTHHQYIAGFIMTGAFAHGAILVI, AIISHLSWASLFLGFHTLGLYVH, and FLVHHAIALGLHTTTLILV. Residues cysteine 559 and cysteine 568 each coordinate [4Fe-4S] cluster. A run of 2 helical transmembrane segments spans residues 575–596 and 643–665; these read AFYLAVFWMLNTIGWVTFYWHW and LSVWAWMFLFGHLVWATGFMFLI. Positions 654, 662, and 670 each coordinate chlorophyll a. Tryptophan 671 contacts phylloquinone. A helical transmembrane segment spans residues 707–727; that stretch reads LVGLAHFSVGYIFTYAAFLIA.

The protein belongs to the PsaA/PsaB family. In terms of assembly, the PsaA/B heterodimer binds the P700 chlorophyll special pair and subsequent electron acceptors. PSI consists of a core antenna complex that captures photons, and an electron transfer chain that converts photonic excitation into a charge separation. The eukaryotic PSI reaction center is composed of at least 11 subunits. P700 is a chlorophyll a/chlorophyll a' dimer, A0 is one or more chlorophyll a, A1 is one or both phylloquinones and FX is a shared 4Fe-4S iron-sulfur center. is required as a cofactor.

It localises to the plastid. It is found in the chloroplast thylakoid membrane. It catalyses the reaction reduced [plastocyanin] + hnu + oxidized [2Fe-2S]-[ferredoxin] = oxidized [plastocyanin] + reduced [2Fe-2S]-[ferredoxin]. Its function is as follows. PsaA and PsaB bind P700, the primary electron donor of photosystem I (PSI), as well as the electron acceptors A0, A1 and FX. PSI is a plastocyanin-ferredoxin oxidoreductase, converting photonic excitation into a charge separation, which transfers an electron from the donor P700 chlorophyll pair to the spectroscopically characterized acceptors A0, A1, FX, FA and FB in turn. Oxidized P700 is reduced on the lumenal side of the thylakoid membrane by plastocyanin. In Atropa belladonna (Belladonna), this protein is Photosystem I P700 chlorophyll a apoprotein A2.